The chain runs to 31 residues: Cytochrome b6-f complex subunit 6 (31 aa).

Residues 4–24 form a helical membrane-spanning segment; it reads ITSYFGFLLVVLTITSALFIG.

This sequence belongs to the PetL family. The 4 large subunits of the cytochrome b6-f complex are cytochrome b6, subunit IV (17 kDa polypeptide, PetD), cytochrome f and the Rieske protein, while the 4 small subunits are PetG, PetL, PetM and PetN. The complex functions as a dimer.

Its subcellular location is the plastid. The protein resides in the chloroplast thylakoid membrane. Component of the cytochrome b6-f complex, which mediates electron transfer between photosystem II (PSII) and photosystem I (PSI), cyclic electron flow around PSI, and state transitions. PetL is important for photoautotrophic growth as well as for electron transfer efficiency and stability of the cytochrome b6-f complex. The protein is Cytochrome b6-f complex subunit 6 of Jasminum nudiflorum (Winter jasmine).